The following is a 139-amino-acid chain: U6 snRNA-associated Sm-like protein LSm4 (139 aa).

Met1 is modified (N-acetylmethionine). Residues 2-75 (LPLSLLKTAQ…IKYLRIPDEI (74 aa)) enclose the Sm domain. Lys80 participates in a covalent cross-link: Glycyl lysine isopeptide (Lys-Gly) (interchain with G-Cter in SUMO2). The segment at 87 to 139 (GRGRGGLQQQKQQKGRGMGGAGRGVFGGRGRGGIPGTGRGQPEKKPGRQAGKQ) is disordered. Gly residues predominate over residues 102–125 (RGMGGAGRGVFGGRGRGGIPGTGR).

The protein belongs to the snRNP Sm proteins family. Component of the precatalytic spliceosome (spliceosome B complex). Component of the U4/U6-U5 tri-snRNP complex, a building block of the precatalytic spliceosome (spliceosome B complex). The U4/U6-U5 tri-snRNP complex is composed of the U4, U6 and U5 snRNAs and at least PRPF3, PRPF4, PRPF6, PRPF8, PRPF31, SNRNP200, TXNL4A, SNRNP40, SNRPB, SNRPD1, SNRPD2, SNRPD3, SNRPE, SNRPF, SNRPG, DDX23, CD2BP2, PPIH, SNU13, EFTUD2, SART1 and USP39, plus LSM2, LSM3, LSM4, LSM5, LSM6, LSM7 and LSM8. LSM2, LSM3, LSM4, LSM5, LSM6, LSM7 and LSM8 form a heptameric, ring-shaped subcomplex (the LSM2-8 complex) that is part of the U4/U6-U5 tri-snRNP complex and the precatalytic spliceosome.

The protein resides in the nucleus. Plays a role in pre-mRNA splicing as component of the U4/U6-U5 tri-snRNP complex that is involved in spliceosome assembly, and as component of the precatalytic spliceosome (spliceosome B complex). The heptameric LSM2-8 complex binds specifically to the 3'-terminal U-tract of U6 snRNA. The chain is U6 snRNA-associated Sm-like protein LSm4 (LSM4) from Bos taurus (Bovine).